The chain runs to 420 residues: MWWRDLTRLRLWLKREAIPGEGRKAAKVNAGVGEKGIYTASSRGGPPSARSKAVTVVAEGAASRSWLSMDAPELGPGLVERLEQLATCPLCGGSFEDPVLLACEHSFCRACLARRWGTPPATGTEASPTACPCCGLPCPRRSLRSNVRLAVEVRISRELREKLAEPGARAGRRRGGRIPTMGCLDLPGEDMRKTWRRFEVPTSKSSNSEDDLPEDYPVVKKMLHRLTADLTLDPGTAHRRLLISADRRSVQLAPPGTPAPPDGPKRFDQLPAVLGAQGFGAGRHCWEVETADAASCRDSSGEDADDEESHYAVGAAGESVQRKGCVRLCPAGAVWAVEGRGGRLWALTAPEPTLLGGVEPPPRRIRVDLDWERGRVAFYDGRSLDLLYAFQAPGPLGERIFPLFCTCDPRAPLRIVPAES.

The RING-type zinc finger occupies 88–135 (CPLCGGSFEDPVLLACEHSFCRACLARRWGTPPATGTEASPTACPCCG). The B30.2/SPRY domain maps to 210 to 420 (DDLPEDYPVV…APLRIVPAES (211 aa)).

As to expression, expressed in testis.

The protein localises to the cytoplasm. It catalyses the reaction S-ubiquitinyl-[E2 ubiquitin-conjugating enzyme]-L-cysteine + [acceptor protein]-L-lysine = [E2 ubiquitin-conjugating enzyme]-L-cysteine + N(6)-ubiquitinyl-[acceptor protein]-L-lysine.. It participates in protein modification; protein ubiquitination. Its function is as follows. Plays an inhibitory role in anti-RNA viral innate immunity by targeting the adapter DDX3X and promoting its 'Lys-48'-linked polyubiquitination. Alternatively, enhances the cGAS-STING pathway activation by promoting 'Lys-63'-linked ubiquitination of STING1, facilitating the STING1-TBK1 complex formation and STING1 activation. (Microbial infection) Plays a positive role in human immunodeficiency virus (HIV-1) replication. The polypeptide is RING finger protein 39 (RNF39) (Homo sapiens (Human)).